The chain runs to 726 residues: Catalase-peroxidase (726 aa).

The segment covering 1 to 13 has biased composition (polar residues); sequence MSMSEETNNSLSS. The segment at 1-34 is disordered; sequence MSMSEETNNSLSSGKCPFHHGGSDQSAGEGTGSR. Positions 105–226 form a cross-link, tryptophyl-tyrosyl-methioninium (Trp-Tyr) (with M-252); it reads WHGAGTYRSV…LAATEMGLIY (122 aa). H106 functions as the Proton acceptor in the catalytic mechanism. The segment at residues 226–252 is a cross-link (tryptophyl-tyrosyl-methioninium (Tyr-Met) (with W-105)); it reads YVNPEGPNASGEPLSAAAAIRATFGNM. H267 contributes to the heme b binding site.

This sequence belongs to the peroxidase family. Peroxidase/catalase subfamily. As to quaternary structure, homodimer or homotetramer. It depends on heme b as a cofactor. Post-translationally, formation of the three residue Trp-Tyr-Met cross-link is important for the catalase, but not the peroxidase activity of the enzyme.

It carries out the reaction H2O2 + AH2 = A + 2 H2O. The catalysed reaction is 2 H2O2 = O2 + 2 H2O. Its function is as follows. Bifunctional enzyme with both catalase and broad-spectrum peroxidase activity. The sequence is that of Catalase-peroxidase from Enterobacter sp. (strain 638).